Reading from the N-terminus, the 165-residue chain is Transcriptional regulator MraZ (165 aa).

2 SpoVT-AbrB domains span residues 5–51 (TYEG…GEEL) and 80–123 (SAEL…NPER).

Belongs to the MraZ family. As to quaternary structure, forms oligomers.

The protein resides in the cytoplasm. It localises to the nucleoid. The protein is Transcriptional regulator MraZ of Hyphomonas neptunium (strain ATCC 15444).